Here is a 1378-residue protein sequence, read N- to C-terminus: DNA-directed RNA polymerase subunit beta' (1378 aa).

Zn(2+)-binding residues include Cys-69, Cys-71, Cys-84, and Cys-87. Residues Asp-460, Asp-462, and Asp-464 each contribute to the Mg(2+) site. Residues Cys-808, Cys-882, Cys-889, and Cys-892 each contribute to the Zn(2+) site.

This sequence belongs to the RNA polymerase beta' chain family. In terms of assembly, the RNAP catalytic core consists of 2 alpha, 1 beta, 1 beta' and 1 omega subunit. When a sigma factor is associated with the core the holoenzyme is formed, which can initiate transcription. The cofactor is Mg(2+). Zn(2+) serves as cofactor.

It carries out the reaction RNA(n) + a ribonucleoside 5'-triphosphate = RNA(n+1) + diphosphate. Functionally, DNA-dependent RNA polymerase catalyzes the transcription of DNA into RNA using the four ribonucleoside triphosphates as substrates. The sequence is that of DNA-directed RNA polymerase subunit beta' from Rickettsia canadensis (strain McKiel).